We begin with the raw amino-acid sequence, 310 residues long: Probable mitochondrial import receptor subunit TOM40-2 (310 aa).

Residue Met1 is modified to N-acetylmethionine.

This sequence belongs to the Tom40 family. As to quaternary structure, forms part of the preprotein translocase complex of the outer mitochondrial membrane (TOM complex) which consists of at least 6 different proteins (TOM5, TOM6, TOM7, TOM20, TOM22/TOM9 and TOM40). Present in a large lipid-enriched complex called mitochondrial transmembrane lipoprotein (MTL) complex made of proteins located in the two mitochondrial membranes, including the TOM complex and the core components of the MICOS complex and containing at least digalactosyldiacylglycerol (DGDG). Binds to MIC60. Component of a mitochondrial large protein complex that contains, at least, MIC60, DGS1, TOM40, TOM20 proteins, and petC/RISP. In terms of tissue distribution, expressed in roots, flowers, young cotyledons and leaves.

It is found in the mitochondrion outer membrane. Functionally, central component of the receptor complex responsible for the recognition and translocation of cytosolically synthesized mitochondrial preproteins. Together with TOM22 functions as the transit peptide receptor at the surface of the mitochondrion outer membrane and facilitates the movement of preproteins into the translocation pore. Directly involved in the pore formation. This is Probable mitochondrial import receptor subunit TOM40-2 from Arabidopsis thaliana (Mouse-ear cress).